A 100-amino-acid chain; its full sequence is uncharacterized protein (100 aa).

A disordered region spans residues 42–84 (PGEPWRTAGGIGEGGAGGDGAAAGGEGDVHGRPAGAEDGEDGA). Over residues 50-67 (GGIGEGGAGGDGAAAGGE) the composition is skewed to gly residues.

This is an uncharacterized protein from Torque teno tamarin virus (isolate So-TTV2).